A 277-amino-acid polypeptide reads, in one-letter code: Trypsin-2 (277 aa).

Residues 1 to 19 (MSNKIAILLLAVVVAVVAC) form the signal peptide. A propeptide spans 20–50 (AQAQPSRRHHLVHPLLPRFLPRLHRDSNGHR) (activation peptide). Positions 51-276 (VVGGFQIDVS…VRDWVRENSG (226 aa)) constitute a Peptidase S1 domain. Cys-76 and Cys-92 form a disulfide bridge. Active-site charge relay system residues include His-91 and Asp-136. 2 disulfides stabilise this stretch: Cys-201-Cys-217 and Cys-228-Cys-252. Ser-232 serves as the catalytic Charge relay system.

It belongs to the peptidase S1 family. Midgut.

The protein localises to the secreted. The enzyme catalyses Preferential cleavage: Arg-|-Xaa, Lys-|-Xaa.. Major function may be to aid in digestion of the blood meal. The sequence is that of Trypsin-2 (TRYP2) from Anopheles gambiae (African malaria mosquito).